Consider the following 177-residue polypeptide: Bifunctional protein PyrR (177 aa).

Residues 42–43, 104–112, and R137 contribute to the substrate site; these read SR and DDVLYTGRT. The short motif at 100 to 112 is the PRPP-binding element; that stretch reads VVIVDDVLYTGRT.

This sequence belongs to the purine/pyrimidine phosphoribosyltransferase family. PyrR subfamily.

The catalysed reaction is UMP + diphosphate = 5-phospho-alpha-D-ribose 1-diphosphate + uracil. In terms of biological role, regulates the transcription of the pyrimidine nucleotide (pyr) operon in response to exogenous pyrimidines. Functionally, also displays a weak uracil phosphoribosyltransferase activity which is not physiologically significant. The protein is Bifunctional protein PyrR of Fusobacterium nucleatum subsp. nucleatum (strain ATCC 25586 / DSM 15643 / BCRC 10681 / CIP 101130 / JCM 8532 / KCTC 2640 / LMG 13131 / VPI 4355).